The chain runs to 155 residues: Small ribosomal subunit protein uS7cz/uS7cy (155 aa).

The protein belongs to the universal ribosomal protein uS7 family. Part of the 30S ribosomal subunit.

It localises to the plastid. The protein localises to the chloroplast. One of the primary rRNA binding proteins, it binds directly to 16S rRNA where it nucleates assembly of the head domain of the 30S subunit. This is Small ribosomal subunit protein uS7cz/uS7cy (rps7-A) from Ipomoea purpurea (Common morning glory).